The following is a 297-amino-acid chain: Bifunctional protein FolD 2 (297 aa).

Residues 177 to 179 (GKS), Ile-202, and Ile-243 each bind NADP(+).

The protein belongs to the tetrahydrofolate dehydrogenase/cyclohydrolase family. As to quaternary structure, homodimer.

It catalyses the reaction (6R)-5,10-methylene-5,6,7,8-tetrahydrofolate + NADP(+) = (6R)-5,10-methenyltetrahydrofolate + NADPH. It carries out the reaction (6R)-5,10-methenyltetrahydrofolate + H2O = (6R)-10-formyltetrahydrofolate + H(+). It functions in the pathway one-carbon metabolism; tetrahydrofolate interconversion. Its function is as follows. Catalyzes the oxidation of 5,10-methylenetetrahydrofolate to 5,10-methenyltetrahydrofolate and then the hydrolysis of 5,10-methenyltetrahydrofolate to 10-formyltetrahydrofolate. The sequence is that of Bifunctional protein FolD 2 from Rhizorhabdus wittichii (strain DSM 6014 / CCUG 31198 / JCM 15750 / NBRC 105917 / EY 4224 / RW1) (Sphingomonas wittichii).